Here is a 213-residue protein sequence, read N- to C-terminus: MIITIFGPPGSGKGTQSSLLIAKYNLKLISVGDLLRNIISSSSELGKKIKGTVESGNLIQDEIICGLLRDQLALVDDNCLLDGFPRNLNQAHFLTQVLQEKYNRDVDIVVELQLDDNIAIDRLKNRLACLDCKSIYSVSSFKSTTCAKCKSTRLEKRIDDADMSAINKRISEYHLQMKGLREYYKGKLLTIDANLSVDEVTQEIESKISCNLV.

10-15 (GSGKGT) is a binding site for ATP. Positions 30–59 (SVGDLLRNIISSSSELGKKIKGTVESGNLI) are NMP. AMP contacts are provided by residues R36, 57 to 59 (NLI), 83 to 86 (GFPR), and Q90. Residues 125–160 (NRLACLDCKSIYSVSSFKSTTCAKCKSTRLEKRIDD) form an LID region. Position 126 (R126) interacts with ATP. C129 and C132 together coordinate Zn(2+). 135–136 (IY) serves as a coordination point for ATP. Zn(2+) is bound by residues C146 and C149. 2 residues coordinate AMP: R157 and R169. L195 provides a ligand contact to ATP.

The protein belongs to the adenylate kinase family. As to quaternary structure, monomer.

The protein localises to the cytoplasm. It catalyses the reaction AMP + ATP = 2 ADP. It functions in the pathway purine metabolism; AMP biosynthesis via salvage pathway; AMP from ADP: step 1/1. Functionally, catalyzes the reversible transfer of the terminal phosphate group between ATP and AMP. Plays an important role in cellular energy homeostasis and in adenine nucleotide metabolism. This chain is Adenylate kinase, found in Wolbachia sp. subsp. Drosophila simulans (strain wRi).